Reading from the N-terminus, the 198-residue chain is Recombination protein RecR (198 aa).

The C4-type zinc finger occupies 57 to 72; it reads CSICCNLSEHDPCPIC. One can recognise a Toprim domain in the interval 80 to 175; the sequence is NIVCVVETPQ…KVTRLGYGLP (96 aa).

It belongs to the RecR family.

May play a role in DNA repair. It seems to be involved in an RecBC-independent recombinational process of DNA repair. It may act with RecF and RecO. This Endomicrobium trichonymphae protein is Recombination protein RecR.